A 365-amino-acid chain; its full sequence is DNA replication and repair protein RecF (365 aa).

An ATP-binding site is contributed by 30–37 (GRNAQGKT).

This sequence belongs to the RecF family.

Its subcellular location is the cytoplasm. In terms of biological role, the RecF protein is involved in DNA metabolism; it is required for DNA replication and normal SOS inducibility. RecF binds preferentially to single-stranded, linear DNA. It also seems to bind ATP. The polypeptide is DNA replication and repair protein RecF (Streptococcus pneumoniae serotype 4 (strain ATCC BAA-334 / TIGR4)).